The following is a 312-amino-acid chain: tRNA dimethylallyltransferase (312 aa).

ATP is bound at residue 15–22 (GPTAAGKS). 17–22 (TAAGKS) serves as a coordination point for substrate. Residues 40–43 (DSMQ) are interaction with substrate tRNA.

It belongs to the IPP transferase family. Monomer. Requires Mg(2+) as cofactor.

The catalysed reaction is adenosine(37) in tRNA + dimethylallyl diphosphate = N(6)-dimethylallyladenosine(37) in tRNA + diphosphate. In terms of biological role, catalyzes the transfer of a dimethylallyl group onto the adenine at position 37 in tRNAs that read codons beginning with uridine, leading to the formation of N6-(dimethylallyl)adenosine (i(6)A). This is tRNA dimethylallyltransferase from Streptomyces avermitilis (strain ATCC 31267 / DSM 46492 / JCM 5070 / NBRC 14893 / NCIMB 12804 / NRRL 8165 / MA-4680).